Consider the following 78-residue polypeptide: MNLGLAILLIVLAFAGGVALGIYLSRRQVENYIADKPILDENALRLMMSQMGQKPSEAKVQQVLRQIKSQQKVASKKK.

A helical transmembrane segment spans residues 3-23; the sequence is LGLAILLIVLAFAGGVALGIY.

Belongs to the UPF0154 family.

It localises to the cell membrane. This chain is UPF0154 protein SSU98_1719, found in Streptococcus suis (strain 98HAH33).